The sequence spans 381 residues: Carbamoyl phosphate synthase small chain (381 aa).

The tract at residues 1–192 (MSKPAILALE…SGYADVSQGD (192 aa)) is CPSase. L-glutamine contacts are provided by Ser-47, Gly-244, and Gly-246. The region spanning 196 to 381 (HVVAYDYGMK…RFVEMMRHRR (186 aa)) is the Glutamine amidotransferase type-1 domain. The Nucleophile role is filled by Cys-272. Positions 273, 276, 314, 316, and 317 each coordinate L-glutamine. Active-site residues include His-356 and Glu-358.

It belongs to the CarA family. Composed of two chains; the small (or glutamine) chain promotes the hydrolysis of glutamine to ammonia, which is used by the large (or ammonia) chain to synthesize carbamoyl phosphate. Tetramer of heterodimers (alpha,beta)4.

It catalyses the reaction hydrogencarbonate + L-glutamine + 2 ATP + H2O = carbamoyl phosphate + L-glutamate + 2 ADP + phosphate + 2 H(+). The enzyme catalyses L-glutamine + H2O = L-glutamate + NH4(+). It participates in amino-acid biosynthesis; L-arginine biosynthesis; carbamoyl phosphate from bicarbonate: step 1/1. The protein operates within pyrimidine metabolism; UMP biosynthesis via de novo pathway; (S)-dihydroorotate from bicarbonate: step 1/3. Small subunit of the glutamine-dependent carbamoyl phosphate synthetase (CPSase). CPSase catalyzes the formation of carbamoyl phosphate from the ammonia moiety of glutamine, carbonate, and phosphate donated by ATP, constituting the first step of 2 biosynthetic pathways, one leading to arginine and/or urea and the other to pyrimidine nucleotides. The small subunit (glutamine amidotransferase) binds and cleaves glutamine to supply the large subunit with the substrate ammonia. The polypeptide is Carbamoyl phosphate synthase small chain (Halomonas eurihalina).